We begin with the raw amino-acid sequence, 735 residues long: DNA replication licensing factor mcm5-A (735 aa).

The 207-residue stretch at 332–538 (IYETVAKSIA…RDMTLAKHVM (207 aa)) folds into the MCM domain. An ADP-binding site is contributed by Arg-372. An Arginine finger motif is present at residues 513 to 516 (SRFD).

This sequence belongs to the MCM family. In terms of assembly, component of the mcm2-7 complex (RLF-M). The complex forms a toroidal hexameric ring with the proposed subunit order mcm2-mcm6-mcm4-mcm7-mcm3-mcm5. The heterodimer of mmcm3/mcm5 interacts with mcm4, mmcm6, mcm7 and weakly with mcm2. Component of the CMG helicase complex, composed of the mcm2-7 complex, the GINS complex and cdc45.

It localises to the nucleus. The protein localises to the chromosome. The enzyme catalyses ATP + H2O = ADP + phosphate + H(+). Acts as a component of the MCM2-7 complex (MCM complex) which is the replicative helicase essential for 'once per cell cycle' DNA replication initiation and elongation in eukaryotic cells. Core component of CDC45-MCM-GINS (CMG) helicase, the molecular machine that unwinds template DNA during replication, and around which the replisome is built. The active ATPase sites in the MCM2-7 ring are formed through the interaction surfaces of two neighboring subunits such that a critical structure of a conserved arginine finger motif is provided in trans relative to the ATP-binding site of the Walker A box of the adjacent subunit. The six ATPase active sites, however, are likely to contribute differentially to the complex helicase activity. In Xenopus laevis (African clawed frog), this protein is DNA replication licensing factor mcm5-A (mcm5-a).